The primary structure comprises 282 residues: Biotin synthase (282 aa).

One can recognise a Radical SAM core domain in the interval 1-228; that stretch reads MQEIFLCSIS…NARLMAAGGR (228 aa). [4Fe-4S] cluster contacts are provided by C17, C21, and C24. Residues C61, C96, C154, and R221 each coordinate [2Fe-2S] cluster.

It belongs to the radical SAM superfamily. Biotin synthase family. In terms of assembly, homodimer. Requires [4Fe-4S] cluster as cofactor. [2Fe-2S] cluster is required as a cofactor.

It carries out the reaction (4R,5S)-dethiobiotin + (sulfur carrier)-SH + 2 reduced [2Fe-2S]-[ferredoxin] + 2 S-adenosyl-L-methionine = (sulfur carrier)-H + biotin + 2 5'-deoxyadenosine + 2 L-methionine + 2 oxidized [2Fe-2S]-[ferredoxin]. The protein operates within cofactor biosynthesis; biotin biosynthesis; biotin from 7,8-diaminononanoate: step 2/2. In terms of biological role, catalyzes the conversion of dethiobiotin (DTB) to biotin by the insertion of a sulfur atom into dethiobiotin via a radical-based mechanism. This is Biotin synthase from Helicobacter acinonychis (strain Sheeba).